The primary structure comprises 198 residues: Ribonuclease HII (198 aa).

The RNase H type-2 domain maps to 10–198 (QLVAGVDEVG…PVKRALGLAS (189 aa)). A divalent metal cation-binding residues include Asp-16, Glu-17, and Asp-108.

Belongs to the RNase HII family. Mn(2+) is required as a cofactor. Mg(2+) serves as cofactor.

The protein localises to the cytoplasm. It catalyses the reaction Endonucleolytic cleavage to 5'-phosphomonoester.. In terms of biological role, endonuclease that specifically degrades the RNA of RNA-DNA hybrids. The protein is Ribonuclease HII of Shigella boydii serotype 4 (strain Sb227).